Reading from the N-terminus, the 91-residue chain is PqqA binding protein (91 aa).

It belongs to the PqqD family. Monomer. Interacts with PqqE.

It participates in cofactor biosynthesis; pyrroloquinoline quinone biosynthesis. Functionally, functions as a PqqA binding protein and presents PqqA to PqqE, in the pyrroloquinoline quinone (PQQ) biosynthetic pathway. The chain is PqqA binding protein from Pseudomonas putida (strain W619).